The following is a 489-amino-acid chain: Glycogen synthase (489 aa).

Residue R20 coordinates ADP-alpha-D-glucose.

The protein belongs to the glycosyltransferase 1 family. Bacterial/plant glycogen synthase subfamily.

The enzyme catalyses [(1-&gt;4)-alpha-D-glucosyl](n) + ADP-alpha-D-glucose = [(1-&gt;4)-alpha-D-glucosyl](n+1) + ADP + H(+). Its pathway is glycan biosynthesis; glycogen biosynthesis. Functionally, synthesizes alpha-1,4-glucan chains using ADP-glucose. This is Glycogen synthase from Chlorobium phaeovibrioides (strain DSM 265 / 1930) (Prosthecochloris vibrioformis (strain DSM 265)).